A 116-amino-acid chain; its full sequence is Cocaine- and amphetamine-regulated transcript protein (116 aa).

The first 27 residues, 1–27 (MESPRLRLLPLLGAALLLLLPLLGALA), serve as a signal peptide directing secretion. Tyr-41 is modified (phosphotyrosine). Ser-48 is modified (phosphoserine). Cystine bridges form between Cys-82–Cys-100, Cys-88–Cys-108, and Cys-102–Cys-115.

Belongs to the CART family.

It is found in the secreted. Satiety factor closely associated with the actions of leptin and neuropeptide y; this anorectic peptide inhibits both normal and starvation-induced feeding and completely blocks the feeding response induced by neuropeptide Y and regulated by leptin in the hypothalamus. This chain is Cocaine- and amphetamine-regulated transcript protein (CARTPT), found in Bos taurus (Bovine).